A 118-amino-acid chain; its full sequence is Large ribosomal subunit protein bL20 (118 aa).

It belongs to the bacterial ribosomal protein bL20 family.

Binds directly to 23S ribosomal RNA and is necessary for the in vitro assembly process of the 50S ribosomal subunit. It is not involved in the protein synthesizing functions of that subunit. This chain is Large ribosomal subunit protein bL20, found in Syntrophotalea carbinolica (strain DSM 2380 / NBRC 103641 / GraBd1) (Pelobacter carbinolicus).